The sequence spans 450 residues: Phosphoglucosamine mutase (450 aa).

Residue serine 107 is the Phosphoserine intermediate of the active site. Positions 107, 246, 248, and 250 each coordinate Mg(2+). Residue serine 107 is modified to Phosphoserine.

It belongs to the phosphohexose mutase family. Mg(2+) serves as cofactor. In terms of processing, activated by phosphorylation.

The enzyme catalyses alpha-D-glucosamine 1-phosphate = D-glucosamine 6-phosphate. Functionally, catalyzes the conversion of glucosamine-6-phosphate to glucosamine-1-phosphate. The polypeptide is Phosphoglucosamine mutase (Aromatoleum aromaticum (strain DSM 19018 / LMG 30748 / EbN1) (Azoarcus sp. (strain EbN1))).